The chain runs to 153 residues: Ribonuclease VapC6 (153 aa).

Residues 6–152 (VFIDSSVMVG…EKVDFIEIIK (147 aa)) enclose the PINc domain. 2 residues coordinate Mg(2+): Asp9 and Asp120.

It belongs to the PINc/VapC protein family. The cofactor is Mg(2+).

Functionally, toxic component of a type II toxin-antitoxin (TA) system. An RNase. The sequence is that of Ribonuclease VapC6 from Methanocaldococcus jannaschii (strain ATCC 43067 / DSM 2661 / JAL-1 / JCM 10045 / NBRC 100440) (Methanococcus jannaschii).